The following is an 80-amino-acid chain: Peroxidase (80 aa).

A disordered region spans residues 56–80 (DANEAEANSDLPGFNSSRSELEAAF). A substrate-binding site is contributed by P67. The N-linked (GlcNAc...) asparagine glycan is linked to N70.

This sequence belongs to the peroxidase family. Classical plant (class III) peroxidase subfamily. It depends on Ca(2+) as a cofactor. Heme b serves as cofactor.

The catalysed reaction is 2 a phenolic donor + H2O2 = 2 a phenolic radical donor + 2 H2O. Functionally, removal of H(2)O(2), oxidation of toxic reductants, biosynthesis and degradation of lignin, suberization, auxin catabolism, response to environmental stresses such as wounding, pathogen attack and oxidative stress. These functions might be dependent on each isozyme/isoform in each plant tissue. The sequence is that of Peroxidase from Triticum aestivum (Wheat).